Reading from the N-terminus, the 310-residue chain is N-acetyl-gamma-glutamyl-phosphate reductase (310 aa).

Residue C117 is part of the active site.

This sequence belongs to the NAGSA dehydrogenase family. Type 2 subfamily.

Its subcellular location is the cytoplasm. It carries out the reaction N-acetyl-L-glutamate 5-semialdehyde + phosphate + NADP(+) = N-acetyl-L-glutamyl 5-phosphate + NADPH + H(+). It functions in the pathway amino-acid biosynthesis; L-arginine biosynthesis; N(2)-acetyl-L-ornithine from L-glutamate: step 3/4. Functionally, catalyzes the NADPH-dependent reduction of N-acetyl-5-glutamyl phosphate to yield N-acetyl-L-glutamate 5-semialdehyde. This Sinorhizobium medicae (strain WSM419) (Ensifer medicae) protein is N-acetyl-gamma-glutamyl-phosphate reductase.